A 556-amino-acid polypeptide reads, in one-letter code: 2-succinyl-5-enolpyruvyl-6-hydroxy-3-cyclohexene-1-carboxylate synthase (556 aa).

The protein belongs to the TPP enzyme family. MenD subfamily. As to quaternary structure, homodimer. It depends on Mg(2+) as a cofactor. Mn(2+) is required as a cofactor. Requires thiamine diphosphate as cofactor.

It carries out the reaction isochorismate + 2-oxoglutarate + H(+) = 5-enolpyruvoyl-6-hydroxy-2-succinyl-cyclohex-3-ene-1-carboxylate + CO2. Its pathway is quinol/quinone metabolism; 1,4-dihydroxy-2-naphthoate biosynthesis; 1,4-dihydroxy-2-naphthoate from chorismate: step 2/7. It participates in quinol/quinone metabolism; menaquinone biosynthesis. Its function is as follows. Catalyzes the thiamine diphosphate-dependent decarboxylation of 2-oxoglutarate and the subsequent addition of the resulting succinic semialdehyde-thiamine pyrophosphate anion to isochorismate to yield 2-succinyl-5-enolpyruvyl-6-hydroxy-3-cyclohexene-1-carboxylate (SEPHCHC). This is 2-succinyl-5-enolpyruvyl-6-hydroxy-3-cyclohexene-1-carboxylate synthase from Klebsiella pneumoniae (strain 342).